Consider the following 323-residue polypeptide: Aspartate carbamoyltransferase catalytic subunit (323 aa).

R65 and T66 together coordinate carbamoyl phosphate. An L-aspartate-binding site is contributed by K93. Carbamoyl phosphate is bound by residues R115, H149, and Q152. Positions 182 and 237 each coordinate L-aspartate. Carbamoyl phosphate-binding residues include G278 and P279.

The protein belongs to the aspartate/ornithine carbamoyltransferase superfamily. ATCase family. Heterododecamer (2C3:3R2) of six catalytic PyrB chains organized as two trimers (C3), and six regulatory PyrI chains organized as three dimers (R2).

It carries out the reaction carbamoyl phosphate + L-aspartate = N-carbamoyl-L-aspartate + phosphate + H(+). Its pathway is pyrimidine metabolism; UMP biosynthesis via de novo pathway; (S)-dihydroorotate from bicarbonate: step 2/3. In terms of biological role, catalyzes the condensation of carbamoyl phosphate and aspartate to form carbamoyl aspartate and inorganic phosphate, the committed step in the de novo pyrimidine nucleotide biosynthesis pathway. This chain is Aspartate carbamoyltransferase catalytic subunit, found in Aromatoleum aromaticum (strain DSM 19018 / LMG 30748 / EbN1) (Azoarcus sp. (strain EbN1)).